We begin with the raw amino-acid sequence, 222 residues long: MNVAILLAAGKGERMSENVPKQFLEIEGRMLFEYPLSTFLKSEAIDGVVIVTRREWFEVVEKRVFHEKVLGIVEGGDTRSQSVRSALEFLEKFSPSYVLVHDSARPFLRKKHVSEVLRRARETGAATLALKNSDALVRVENDRIEYIPRKGVYRILTPQAFSYEILKEAHENGGEWADDTEPVQKLGVKIALVEGDPLCFKVTFKEDLELARIIAREWERIP.

The protein belongs to the IspD/TarI cytidylyltransferase family. IspD subfamily.

The catalysed reaction is 2-C-methyl-D-erythritol 4-phosphate + CTP + H(+) = 4-CDP-2-C-methyl-D-erythritol + diphosphate. The protein operates within isoprenoid biosynthesis; isopentenyl diphosphate biosynthesis via DXP pathway; isopentenyl diphosphate from 1-deoxy-D-xylulose 5-phosphate: step 2/6. Its function is as follows. Catalyzes the formation of 4-diphosphocytidyl-2-C-methyl-D-erythritol from CTP and 2-C-methyl-D-erythritol 4-phosphate (MEP). The protein is 2-C-methyl-D-erythritol 4-phosphate cytidylyltransferase of Thermotoga sp. (strain RQ2).